We begin with the raw amino-acid sequence, 154 residues long: Putative glutamine amidotransferase-like protein RP712 (154 aa).

One can recognise a Glutamine amidotransferase type-1 domain in the interval 1 to 94; the sequence is MSIEKEKFWA…QQSVWSFHNK (94 aa).

The polypeptide is Putative glutamine amidotransferase-like protein RP712 (Rickettsia prowazekii (strain Madrid E)).